The primary structure comprises 88 residues: MKNEIHPDYHPVVFQDAGTGFQFLTRSTATSDRTIAWEDGNEYPLIVVDVTSESHPFWTGAQRVMDTAGRVEKFERRFGGMARRKKKA.

It belongs to the bacterial ribosomal protein bL31 family. Type B subfamily. Part of the 50S ribosomal subunit.

The sequence is that of Large ribosomal subunit protein bL31B from Corynebacterium efficiens (strain DSM 44549 / YS-314 / AJ 12310 / JCM 11189 / NBRC 100395).